A 165-amino-acid polypeptide reads, in one-letter code: uncharacterized protein (165 aa).

A signal peptide spans 1–25; it reads MKRVLFSVIVFTAVGFTFCQSKAHA.

This is an uncharacterized protein from Bacillus subtilis (strain 168).